Here is a 458-residue protein sequence, read N- to C-terminus: Jacalin-related lectin 22 (458 aa).

3 Jacalin-type lectin domains span residues Tyr-5 to Leu-153, Leu-160 to Pro-301, and Ser-311 to Pro-453.

Belongs to the jacalin lectin family. As to quaternary structure, component of the PYK10 complex, at least composed of PYK10/BGLU23, BGLU21, BGLU22, JAL22, JAL23, PBP1/JAL30, PBP2/JAL31, JAL32, JAL33, JAL34, JAL35, GLL22 and GLL23.

Inhibitor-type lectin that may regulate the correct polymerization and activation of BGLU23/PYK10 upon tissue damage. This Arabidopsis thaliana (Mouse-ear cress) protein is Jacalin-related lectin 22 (JAL22).